Consider the following 215-residue polypeptide: Outer membrane protein assembly factor BamC homolog (215 aa).

A signal peptide spans 1–16 (MKKIILNLVTAIILAG). Residue cysteine 17 is the site of N-palmitoyl cysteine attachment. Cysteine 17 is lipidated: S-diacylglycerol cysteine.

It belongs to the BamC family.

It is found in the cell outer membrane. In Haemophilus influenzae (strain ATCC 51907 / DSM 11121 / KW20 / Rd), this protein is Outer membrane protein assembly factor BamC homolog.